The following is a 164-amino-acid chain: Nucleotide-binding protein Acid345_2028 (164 aa).

It belongs to the YajQ family.

Nucleotide-binding protein. The protein is Nucleotide-binding protein Acid345_2028 of Koribacter versatilis (strain Ellin345).